Here is a 367-residue protein sequence, read N- to C-terminus: Heme A synthase (367 aa).

The next 8 membrane-spanning stretches (helical) occupy residues 25 to 45 (ALRL…LVGG), 111 to 131 (LIAR…WLTG), 139 to 159 (WPLV…WWMV), 174 to 194 (LATH…IMRG), 210 to 230 (GLAA…ALVA), 272 to 292 (FIHR…MVIA), 305 to 325 (AVLL…TLLM), and 327 to 347 (VPLH…GFAV). His274 contacts heme. His335 serves as a coordination point for heme.

The protein belongs to the COX15/CtaA family. Type 2 subfamily. In terms of assembly, interacts with CtaB. Heme b is required as a cofactor.

Its subcellular location is the cell membrane. It carries out the reaction Fe(II)-heme o + 2 A + H2O = Fe(II)-heme a + 2 AH2. Its pathway is porphyrin-containing compound metabolism; heme A biosynthesis; heme A from heme O: step 1/1. In terms of biological role, catalyzes the conversion of heme O to heme A by two successive hydroxylations of the methyl group at C8. The first hydroxylation forms heme I, the second hydroxylation results in an unstable dihydroxymethyl group, which spontaneously dehydrates, resulting in the formyl group of heme A. In Rhizobium etli (strain ATCC 51251 / DSM 11541 / JCM 21823 / NBRC 15573 / CFN 42), this protein is Heme A synthase.